The sequence spans 630 residues: tRNA uridine 5-carboxymethylaminomethyl modification enzyme MnmG (630 aa).

FAD is bound at residue 13-18 (GGGHAG). 273-287 (GPRYCPSIEDKIHRF) is an NAD(+) binding site.

Belongs to the MnmG family. As to quaternary structure, homodimer. Heterotetramer of two MnmE and two MnmG subunits. FAD is required as a cofactor.

Its subcellular location is the cytoplasm. Its function is as follows. NAD-binding protein involved in the addition of a carboxymethylaminomethyl (cmnm) group at the wobble position (U34) of certain tRNAs, forming tRNA-cmnm(5)s(2)U34. The chain is tRNA uridine 5-carboxymethylaminomethyl modification enzyme MnmG from Pseudomonas putida (strain ATCC 700007 / DSM 6899 / JCM 31910 / BCRC 17059 / LMG 24140 / F1).